We begin with the raw amino-acid sequence, 583 residues long: Aspartate--tRNA ligase (583 aa).

Glu-169 serves as a coordination point for L-aspartate. The segment at 193-196 (QLFK) is aspartate. L-aspartate is bound at residue Arg-215. Residues 215-217 (RDE) and Gln-224 each bind ATP. His-443 contacts L-aspartate. An ATP-binding site is contributed by Glu-477. Arg-484 contributes to the L-aspartate binding site. An ATP-binding site is contributed by 529-532 (GIDR).

Belongs to the class-II aminoacyl-tRNA synthetase family. Type 1 subfamily. In terms of assembly, homodimer.

Its subcellular location is the cytoplasm. The enzyme catalyses tRNA(Asp) + L-aspartate + ATP = L-aspartyl-tRNA(Asp) + AMP + diphosphate. In terms of biological role, catalyzes the attachment of L-aspartate to tRNA(Asp) in a two-step reaction: L-aspartate is first activated by ATP to form Asp-AMP and then transferred to the acceptor end of tRNA(Asp). The chain is Aspartate--tRNA ligase from Stenotrophomonas maltophilia (strain K279a).